A 73-amino-acid chain; its full sequence is Tetrahydromethanopterin S-methyltransferase subunit G (73 aa).

Residues 48 to 68 (IGILYGAVVGLLLFLIYVSVS) form a helical membrane-spanning segment.

The protein belongs to the MtrG family. The complex is composed of 8 subunits; MtrA, MtrB, MtrC, MtrD, MtrE, MtrF, MtrG and MtrH.

The protein resides in the cell membrane. The catalysed reaction is 5-methyl-5,6,7,8-tetrahydromethanopterin + coenzyme M + 2 Na(+)(in) = 5,6,7,8-tetrahydromethanopterin + methyl-coenzyme M + 2 Na(+)(out). It functions in the pathway one-carbon metabolism; methanogenesis from CO(2); methyl-coenzyme M from 5,10-methylene-5,6,7,8-tetrahydromethanopterin: step 2/2. Functionally, part of a complex that catalyzes the formation of methyl-coenzyme M and tetrahydromethanopterin from coenzyme M and methyl-tetrahydromethanopterin. This is an energy-conserving, sodium-ion translocating step. This is Tetrahydromethanopterin S-methyltransferase subunit G from Methanosarcina acetivorans (strain ATCC 35395 / DSM 2834 / JCM 12185 / C2A).